Consider the following 835-residue polypeptide: Protein translocase subunit SecA (835 aa).

ATP is bound by residues Gln85, 103 to 107 (GEGKT), and Asp492. The segment at 788 to 807 (VQGEAVHPSSDGEEAKKKPV) is disordered. Zn(2+) is bound by residues Cys819, Cys821, Cys830, and Cys831.

The protein belongs to the SecA family. In terms of assembly, monomer and homodimer. Part of the essential Sec protein translocation apparatus which comprises SecA, SecYEG and auxiliary proteins SecDF. Other proteins may also be involved. It depends on Zn(2+) as a cofactor.

Its subcellular location is the cell membrane. The protein resides in the cytoplasm. It catalyses the reaction ATP + H2O + cellular proteinSide 1 = ADP + phosphate + cellular proteinSide 2.. Part of the Sec protein translocase complex. Interacts with the SecYEG preprotein conducting channel. Has a central role in coupling the hydrolysis of ATP to the transfer of proteins into and across the cell membrane, serving as an ATP-driven molecular motor driving the stepwise translocation of polypeptide chains across the membrane. This chain is Protein translocase subunit SecA, found in Bacillus cereus (strain ATCC 10987 / NRS 248).